A 610-amino-acid polypeptide reads, in one-letter code: NTPase KAP family P-loop domain-containing protein 1 (610 aa).

A KAP NTPase domain is found at 1–414 (MQQEAAQRES…NTVPITVRLL (414 aa)). A run of 3 helical transmembrane segments spans residues 22-42 (AVSGWGVPQLLWYLVFLQPII), 118-138 (VCLGLLALLAALGLGVGLLYL), and 157-177 (VFGGAATTLSGSGLLMAVYSV). The tract at residues 540–587 (ALKPPSPPKSPTRDTPHAAHRANSASRAPPSGRASGQAGEGHHTGDLA) is disordered. The span at 560-575 (RANSASRAPPSGRASG) shows a compositional bias: low complexity.

Its subcellular location is the membrane. This chain is NTPase KAP family P-loop domain-containing protein 1 (NKPD1), found in Homo sapiens (Human).